Here is a 195-residue protein sequence, read N- to C-terminus: Probable nicotinate-nucleotide adenylyltransferase (195 aa).

This sequence belongs to the NadD family.

It carries out the reaction nicotinate beta-D-ribonucleotide + ATP + H(+) = deamido-NAD(+) + diphosphate. The protein operates within cofactor biosynthesis; NAD(+) biosynthesis; deamido-NAD(+) from nicotinate D-ribonucleotide: step 1/1. Its function is as follows. Catalyzes the reversible adenylation of nicotinate mononucleotide (NaMN) to nicotinic acid adenine dinucleotide (NaAD). This is Probable nicotinate-nucleotide adenylyltransferase from Bordetella petrii (strain ATCC BAA-461 / DSM 12804 / CCUG 43448).